We begin with the raw amino-acid sequence, 205 residues long: MFEYVTGYVEYVGPEYVVIDHNGIGYQIFTPNPYVFQRSKQEIRVYTYHYVREDIMALYGFKTREERLLFTKLLGVSGIGPKGALAILASGQTGQVVQAIEHEDEKFLVKFPGVGKKTARQMILDLKGKLADVVPDAFVDLFSDEERFDEKKGSSAELDEALEALRALGYAEREVSRVVPELLKESLTTDQYIKKALSLLLNGKR.

The segment at 1 to 62 (MFEYVTGYVE…EDIMALYGFK (62 aa)) is domain I. The tract at residues 63-141 (TREERLLFTK…DVVPDAFVDL (79 aa)) is domain II. Residues 142–152 (FSDEERFDEKK) form a flexible linker region. A domain III region spans residues 153 to 205 (GSSAELDEALEALRALGYAEREVSRVVPELLKESLTTDQYIKKALSLLLNGKR).

The protein belongs to the RuvA family. Homotetramer. Forms an RuvA(8)-RuvB(12)-Holliday junction (HJ) complex. HJ DNA is sandwiched between 2 RuvA tetramers; dsDNA enters through RuvA and exits via RuvB. An RuvB hexamer assembles on each DNA strand where it exits the tetramer. Each RuvB hexamer is contacted by two RuvA subunits (via domain III) on 2 adjacent RuvB subunits; this complex drives branch migration. In the full resolvosome a probable DNA-RuvA(4)-RuvB(12)-RuvC(2) complex forms which resolves the HJ.

The protein localises to the cytoplasm. Functionally, the RuvA-RuvB-RuvC complex processes Holliday junction (HJ) DNA during genetic recombination and DNA repair, while the RuvA-RuvB complex plays an important role in the rescue of blocked DNA replication forks via replication fork reversal (RFR). RuvA specifically binds to HJ cruciform DNA, conferring on it an open structure. The RuvB hexamer acts as an ATP-dependent pump, pulling dsDNA into and through the RuvAB complex. HJ branch migration allows RuvC to scan DNA until it finds its consensus sequence, where it cleaves and resolves the cruciform DNA. In Bacillus cereus (strain AH187), this protein is Holliday junction branch migration complex subunit RuvA.